The sequence spans 131 residues: Interleukin-13 (131 aa).

The signal sequence occupies residues 1–18 (MALWLTLVIALTCFGGLA). Residues Asn-39, Asn-50, Asn-58, and Asn-74 are each glycosylated (N-linked (GlcNAc...) asparagine). 2 cysteine pairs are disulfide-bonded: Cys-49-Cys-78 and Cys-66-Cys-92.

This sequence belongs to the IL-4/IL-13 family. As to quaternary structure, interacts with IL13RA2.

It is found in the secreted. In terms of biological role, cytokine that plays important roles in allergic inflammation and immune response to parasite infection. Synergizes with IL2 in regulating interferon-gamma synthesis. Stimulates B-cell proliferation, and activation of eosinophils, basophils, and mast cells. Plays an important role in controlling IL33 activity by modulating the production of transmembrane and soluble forms of interleukin-1 receptor-like 1/IL1RL1. Displays the capacity to antagonize Th1-driven proinflammatory immune response and downregulates synthesis of many proinflammatory cytokines including IL1, IL6, IL10, IL12 and TNF-alpha through a mechanism that partially involves suppression of NF-kappa-B. Also functions on nonhematopoietic cells, including endothelial cells where it induces vascular cell adhesion protein 1/VCAM1, which is important in the recruitment of eosinophils. Exerts its biological effects through its receptors which comprises the IL4R chain and the IL13RA1 chain, to activate JAK1 and TYK2, leading to the activation of STAT6. Aside from IL13RA1, another receptor IL13RA2 acts as a high affinity decoy for IL13 and mediates internalization and depletion of extracellular IL13. The polypeptide is Interleukin-13 (IL13) (Sus scrofa (Pig)).